Reading from the N-terminus, the 134-residue chain is Cytochrome b (134 aa).

Transmembrane regions (helical) follow at residues 33–53 (FGSLLGVCLAVQILTGLFLAM), 77–98 (WLLRYLHANGASMFFICLYLHV), and 113–133 (WNVGILLLFAVMATAFMGYVL). 2 residues coordinate heme b: His-83 and His-97.

The protein belongs to the cytochrome b family. As to quaternary structure, the cytochrome bc1 complex contains 11 subunits: 3 respiratory subunits (MT-CYB, CYC1 and UQCRFS1), 2 core proteins (UQCRC1 and UQCRC2) and 6 low-molecular weight proteins (UQCRH/QCR6, UQCRB/QCR7, UQCRQ/QCR8, UQCR10/QCR9, UQCR11/QCR10 and a cleavage product of UQCRFS1). This cytochrome bc1 complex then forms a dimer. It depends on heme b as a cofactor.

It is found in the mitochondrion inner membrane. Component of the ubiquinol-cytochrome c reductase complex (complex III or cytochrome b-c1 complex) that is part of the mitochondrial respiratory chain. The b-c1 complex mediates electron transfer from ubiquinol to cytochrome c. Contributes to the generation of a proton gradient across the mitochondrial membrane that is then used for ATP synthesis. The protein is Cytochrome b (MT-CYB) of Chiroderma trinitatum (Little big-eyed bat).